A 424-amino-acid chain; its full sequence is Inhibin beta A chain (424 aa).

Positions 1–20 (MPLLWLRGFLLASCWIIVRS) are cleaved as a signal peptide. Positions 21-308 (SPTPGSGGHS…EEHPHRRRRR (288 aa)) are excised as a propeptide. N-linked (GlcNAc...) asparagine glycosylation occurs at Asn165. Disordered regions lie at residues 178–197 (QQRRPQGSADAGEEAEDVGF) and 259–306 (KKKK…HRRR). A compositionally biased stretch (acidic residues) spans 188–197 (AGEEAEDVGF). Residues 263-275 (KEEEAEGRKRDGE) are compositionally biased toward basic and acidic residues. Intrachain disulfides connect Cys312-Cys320, Cys319-Cys389, Cys348-Cys421, and Cys352-Cys423.

Belongs to the TGF-beta family. As to quaternary structure, dimeric, linked by one or more disulfide bonds. Inhibin A is a dimer of alpha/INHA and beta-A/INHBA. Activin A is a homodimer of beta-A/INHBA. Activin AB is a dimer of beta-A/INHBA and beta-B/INHBB. Interacts with FST and FSTL3; these interactions prevent activin A interaction to its type II receptor. Activin A interacts with ACVR2A. Activin A interacts with BMPR2. Inhibin A interacts with ACVR1; this interaction creates a non-signaling complex (NSC) that inhibits ACVR1-mediated BMP signaling. Inhibin A interacts with ACVR2A.

It localises to the secreted. In terms of biological role, inhibins/activins are involved in regulating a number of diverse functions such as hypothalamic and pituitary hormone secretion, gonadal hormone secretion, germ cell development and maturation, erythroid differentiation, insulin secretion, nerve cell survival, embryonic axial development or bone growth, depending on their subunit composition. Its function is as follows. Activin A is a homodimer of INHBA that plays a role in several essential biological processes including embryonic development, stem cell maintenance and differentiation, haematopoiesis, cell proliferation and tissue fibrosis. Signals through type I (such as ACVR1B or ACVR1C) and type II receptors (such as ACVR2A, ACVR2B or BMPR2) which, upon ligand binding, phosphorylate SMAD2 and SMAD3 intracellular signaling mediators that form a complex with SMAD4, translocate to the nucleus and modulate gene expression. Can also activate alternative non-canonical intracellular signaling pathways including the p38 MAPK, extracellular signal-regulated kinases 1/2 (ERK1/2) and c-Jun N-terminal kinases (JNKs) to modulate cell migration and differentiation. Alternatively, promotes osteoblastic differentiation via ACVRL1-SMAD1/5/9 pathway. In addition, can engage the type I receptor ACVR1 to form an ACVR1-activin A-type II receptor non-signaling complex (NSC) that renders receptors unavailable for engagement with BMPs, hence resulting in an apparent inhibition of ACVR1-mediated BMP signaling. Inhibin A is a dimer of alpha/INHA and beta-A/INHBA that functions as a feedback regulator in the hypothalamic-pituitary-gonadal (HPG) axis. Inhibits the secretion of FSH from the anterior pituitary gland by acting on pituitary gonadotrope cells. Antagonizes activin A by binding to the proteoglycan, betaglycan, and forming a stable complex with and, thereby, sequestering type II activin receptors while excluding type I receptor. The sequence is that of Inhibin beta A chain (INHBA) from Sus scrofa (Pig).